Reading from the N-terminus, the 480-residue chain is CASP8 and FADD-like apoptosis regulator (480 aa).

DED domains are found at residues 1 to 73 (MSAE…RILK) and 92 to 170 (DYRV…KIQK). The interaction with CASP8 stretch occupies residues 1–195 (MSAEVIHQVE…LQAAIQKSLK (195 aa)). Residues 1–227 (MSAEVIHQVE…GAQQEPVKKS (227 aa)) form an interaction with FADD region. Residues 1 to 305 (MSAEVIHQVE…FACMPEHRDY (305 aa)) form an interaction with CASP8 propeptide region. Residues 1–435 (MSAEVIHQVE…CLSQKLRQER (435 aa)) form a not proteolytically processed and involved in apoptosis inhibition region. An interaction with CASP3 region spans residues 192-435 (KSLKDPSNNF…CLSQKLRQER (244 aa)). Residues 192–480 (KSLKDPSNNF…LRKKLILSYT (289 aa)) form an interaction with TRAF1 and TRAF2 region. The segment at 217–480 (LGAQQEPVKK…LRKKLILSYT (264 aa)) is interaction with CASP8 subunits p18 and p10. Residues 263–358 (ETELLRDTFT…AGKPKMFFIQ (96 aa)) are caspase. Residues 370 to 480 (SSLLEVDGPA…LRKKLILSYT (111 aa)) are interaction with CASP8.

Belongs to the peptidase C14A family. TNFRSF6 stimulation triggers recruitment to the death-inducing signaling complex (DISC) formed by TNFRSF6, FADD and CASP8. A proteolytic fragment (p43) stays associated with the DISC. Also interacts with FADD, CASP8, CASP3, TRAF1, TRAF2 and Bcl-X(L) (in vitro). Interacts with RIPK1. As to quaternary structure, (Microbial infection) Interacts with HBV protein X. Proteolytically processed by CASP8 generating subunit p43 and p12. As to expression, widely expressed. Higher expression in skeletal muscle, pancreas, heart, kidney, placenta, and peripheral blood leukocytes. Also detected in diverse cell lines. Isoform 8 is predominantly expressed in testis and skeletal muscle.

Apoptosis regulator protein which may function as a crucial link between cell survival and cell death pathways in mammalian cells. Acts as an inhibitor of TNFRSF6 mediated apoptosis. A proteolytic fragment (p43) is likely retained in the death-inducing signaling complex (DISC) thereby blocking further recruitment and processing of caspase-8 at the complex. Full length and shorter isoforms have been shown either to induce apoptosis or to reduce TNFRSF-triggered apoptosis. Lacks enzymatic (caspase) activity. This Homo sapiens (Human) protein is CASP8 and FADD-like apoptosis regulator (CFLAR).